The sequence spans 473 residues: Bactericidal permeability-increasing protein (473 aa).

A signal peptide spans 1–18; sequence MVLCCWLALVALIPMTLS. Residues 19–29 form a central sheet, part 1 region; it reads INPGVKVRLTG. The tract at residues 28–209 is N-terminal barrel; that stretch reads TGKGLEYGRQ…SDLNPQLKTL (182 aa). Cysteines 153 and 192 form a disulfide. The tract at residues 211-275 is central sheet, part 2; sequence VLAKVDQYAE…INNMLYISVS (65 aa). The interval 225–230 is cleavage sites for elastase; it reads MVSSPT. Positions 276-446 are C-terminal barrel; that stretch reads AFTINSAAFV…LAKGYPLPTL (171 aa). An N-linked (GlcNAc...) asparagine glycan is attached at Asn365. Positions 453–472 are central sheet, part 3; it reads NTELQVLKDYMLIGTDVQFT.

Belongs to the BPI/LBP/Plunc superfamily. BPI/LBP family. As to quaternary structure, monomer. Homodimer; disulfide-linked. In terms of tissue distribution, expressed in spleen. Lower expression in gill, head kidney, entire kidney, skin, intestine and blood and lowest expression in liver and muscle.

The protein localises to the secreted. Functionally, the cytotoxic action of BPI is limited to many species of Gram-negative bacteria; this specificity may be explained by a strong affinity of the very basic N-terminal half for the negatively charged lipopolysaccharides that are unique to the Gram-negative bacterial outer envelope. Exhibits neutralizing capacity towards P.aeruginosa lipopolysaccharides (LPS) and has bactericidal activity against multiple drug resistant (MDR) P.aeruginosa strains derived from people with cystic fibrosis. Has antibacterial activity against E.coli, but not against S.iniae. The polypeptide is Bactericidal permeability-increasing protein (Sebastes schlegelii (Korean rockfish)).